Here is a 571-residue protein sequence, read N- to C-terminus: Proline--tRNA ligase (571 aa).

This sequence belongs to the class-II aminoacyl-tRNA synthetase family. ProS type 1 subfamily. Homodimer.

Its subcellular location is the cytoplasm. It catalyses the reaction tRNA(Pro) + L-proline + ATP = L-prolyl-tRNA(Pro) + AMP + diphosphate. Its function is as follows. Catalyzes the attachment of proline to tRNA(Pro) in a two-step reaction: proline is first activated by ATP to form Pro-AMP and then transferred to the acceptor end of tRNA(Pro). As ProRS can inadvertently accommodate and process non-cognate amino acids such as alanine and cysteine, to avoid such errors it has two additional distinct editing activities against alanine. One activity is designated as 'pretransfer' editing and involves the tRNA(Pro)-independent hydrolysis of activated Ala-AMP. The other activity is designated 'posttransfer' editing and involves deacylation of mischarged Ala-tRNA(Pro). The misacylated Cys-tRNA(Pro) is not edited by ProRS. The protein is Proline--tRNA ligase of Pasteurella multocida (strain Pm70).